The sequence spans 425 residues: 3-deoxy-D-manno-octulosonic acid transferase (425 aa).

Residues 3-23 (ELLYTALLYLIQPLIWIRLWV) form a helical; Signal-anchor membrane-spanning segment. Glutamate 60 (proton acceptor) is an active-site residue. Residues 268–269 (PR), 309–311 (MGE), and 335–338 (NPLE) contribute to the CMP site.

Belongs to the glycosyltransferase group 1 family. Glycosyltransferase 30 subfamily.

It is found in the cell inner membrane. It carries out the reaction lipid IVA (E. coli) + CMP-3-deoxy-beta-D-manno-octulosonate = alpha-Kdo-(2-&gt;6)-lipid IVA (E. coli) + CMP + H(+). The enzyme catalyses alpha-Kdo-(2-&gt;6)-lipid IVA (E. coli) + CMP-3-deoxy-beta-D-manno-octulosonate = alpha-Kdo-(2-&gt;4)-alpha-Kdo-(2-&gt;6)-lipid IVA (E. coli) + CMP + H(+). It participates in glycolipid biosynthesis; KDO(2)-lipid A biosynthesis; KDO(2)-lipid A from CMP-3-deoxy-D-manno-octulosonate and lipid IV(A): step 1/4. The protein operates within glycolipid biosynthesis; KDO(2)-lipid A biosynthesis; KDO(2)-lipid A from CMP-3-deoxy-D-manno-octulosonate and lipid IV(A): step 2/4. It functions in the pathway bacterial outer membrane biogenesis; LPS core biosynthesis. Its function is as follows. Involved in lipopolysaccharide (LPS) biosynthesis. Catalyzes the transfer of two 3-deoxy-D-manno-octulosonate (Kdo) residues from CMP-Kdo to lipid IV(A), the tetraacyldisaccharide-1,4'-bisphosphate precursor of lipid A. This is 3-deoxy-D-manno-octulosonic acid transferase (waaA) from Escherichia coli O157:H7.